Consider the following 80-residue polypeptide: Trefoil factor 3 (80 aa).

Residues 1–23 form the signal peptide; that stretch reads MEARVLWLLVVVLVLGSSSLAVA. One can recognise a P-type domain in the interval 30-73; it reads NLCEVPPKDRVDCGYPEITSEQCVNRGCCFDSSIHGVPWCFKPL. 3 disulfide bridges follow: Cys-32–Cys-58, Cys-42–Cys-57, and Cys-52–Cys-69.

As to quaternary structure, monomer. Homodimer; disulfide-linked.

Its subcellular location is the secreted. The protein localises to the extracellular space. It is found in the extracellular matrix. The protein resides in the cytoplasm. In terms of biological role, involved in the maintenance and repair of the intestinal mucosa. Promotes the mobility of epithelial cells in healing processes (motogen). The sequence is that of Trefoil factor 3 (TFF3) from Canis lupus familiaris (Dog).